The sequence spans 192 residues: Interferon epsilon (192 aa).

The first 21 residues, 1–21 (MVHRQLPETVLLLLVSSTIFS), serve as a signal peptide directing secretion. Cys52 and Cys162 are joined by a disulfide.

It belongs to the alpha/beta interferon family. As to expression, expressed at very high levels in uterus and, at much lower levels, in ovary and cervix. Very low levels, if any, in other organs. In the endometrium, expressed in the luminal and glandular epithelial cells (at protein level).

It is found in the secreted. In terms of biological role, type I interferon required for maintaining basal levels of IFN-regulated genes, including 2'-5'-oligoadenylate synthetase, IRF7 and ISG15, in the female reproductive tract. Directly mediates protection against viral, including HSV-2, and bacterial, including Chlamydia muridarum, genital infections. This chain is Interferon epsilon (Ifne), found in Mus musculus (Mouse).